Reading from the N-terminus, the 88-residue chain is Small ribosomal subunit protein bS20 (88 aa).

The interval 1–27 (MANTKQAQKRARQAEQRRQHNASQRSM) is disordered.

Belongs to the bacterial ribosomal protein bS20 family.

Functionally, binds directly to 16S ribosomal RNA. This Chromohalobacter salexigens (strain ATCC BAA-138 / DSM 3043 / CIP 106854 / NCIMB 13768 / 1H11) protein is Small ribosomal subunit protein bS20.